The following is a 906-amino-acid chain: Translation initiation factor IF-2 (906 aa).

Disordered regions lie at residues 94–125 (APEKTEVIPEETENTVEESTAAETVESEPETA), 165–232 (ESEA…TGKK), and 270–321 (RQEQ…SSEV). Basic and acidic residues-rich tracts occupy residues 165–176 (ESEAEKGTEIEK), 222–232 (GPAEARETGKK), and 270–284 (RQEQKRREEAKKREA). Over residues 299–313 (QQRRSLKRGGKRKKY) the composition is skewed to basic residues. Residues 405–574 (ERPPVITIMG…LLQAEMMELK (170 aa)) form the tr-type G domain. Residues 414–421 (GHVDHGKT) are G1. 414 to 421 (GHVDHGKT) provides a ligand contact to GTP. A G2 region spans residues 439-443 (GITQH). A G3 region spans residues 460-463 (DTPG). GTP-binding positions include 460-464 (DTPGH) and 514-517 (NKMD). Residues 514 to 517 (NKMD) form a G4 region. The tract at residues 550–552 (SAH) is G5.

It belongs to the TRAFAC class translation factor GTPase superfamily. Classic translation factor GTPase family. IF-2 subfamily.

Its subcellular location is the cytoplasm. Functionally, one of the essential components for the initiation of protein synthesis. Protects formylmethionyl-tRNA from spontaneous hydrolysis and promotes its binding to the 30S ribosomal subunits. Also involved in the hydrolysis of GTP during the formation of the 70S ribosomal complex. In Sulfurovum sp. (strain NBC37-1), this protein is Translation initiation factor IF-2.